A 419-amino-acid polypeptide reads, in one-letter code: rRNA methyltransferase 3, mitochondrial (419 aa).

A mitochondrion-targeting transit peptide spans 1 to 39 (MAALCGGMLRGCILKPLGLSGSLQLKRNVRALRRTPVRV). Positions 42 to 68 (ADEEGRERKQVEASRQRQPRQNESQAC) are disordered. The span at 44–56 (EEGRERKQVEASR) shows a compositional bias: basic and acidic residues. Gly-357, Ile-381, and Leu-390 together coordinate S-adenosyl-L-methionine.

The protein belongs to the class IV-like SAM-binding methyltransferase superfamily. RNA methyltransferase TrmH family.

The protein resides in the mitochondrion. It catalyses the reaction a uridine in rRNA + S-adenosyl-L-methionine = a 2'-O-methyluridine in rRNA + S-adenosyl-L-homocysteine + H(+). In terms of biological role, S-adenosyl-L-methionine-dependent 2'-O-ribose methyltransferase that catalyzes the formation of 2'-O-methylguanosine at position 1370 (Gm1370) in the mitochondrial large subunit ribosomal RNA (mtLSU rRNA), a conserved modification in the peptidyl transferase domain of the mtLSU rRNA. Also required for formation of 2'-O-methyluridine at position 1369 (Um1369) mediated by MRM2. The protein is rRNA methyltransferase 3, mitochondrial of Xenopus laevis (African clawed frog).